A 193-amino-acid polypeptide reads, in one-letter code: uncharacterized protein (193 aa).

The signal sequence occupies residues 1–26 (MRNVFVGALCMCGMSFVFSDSVRSAA).

This is an uncharacterized protein from Treponema pallidum (strain Nichols).